A 134-amino-acid polypeptide reads, in one-letter code: UPF0102 protein SYNW1051 (134 aa).

The protein belongs to the UPF0102 family.

The protein is UPF0102 protein SYNW1051 of Parasynechococcus marenigrum (strain WH8102).